Consider the following 417-residue polypeptide: Phosphoribosylamine--glycine ligase (417 aa).

In terms of domain architecture, ATP-grasp spans Lys-107 to Glu-313. Leu-133–Ser-194 is a binding site for ATP. Mg(2+) is bound by residues Glu-283 and Asn-285.

It belongs to the GARS family. The cofactor is Mg(2+). Requires Mn(2+) as cofactor.

The catalysed reaction is 5-phospho-beta-D-ribosylamine + glycine + ATP = N(1)-(5-phospho-beta-D-ribosyl)glycinamide + ADP + phosphate + H(+). It participates in purine metabolism; IMP biosynthesis via de novo pathway; N(1)-(5-phospho-D-ribosyl)glycinamide from 5-phospho-alpha-D-ribose 1-diphosphate: step 2/2. The chain is Phosphoribosylamine--glycine ligase from Caldanaerobacter subterraneus subsp. tengcongensis (strain DSM 15242 / JCM 11007 / NBRC 100824 / MB4) (Thermoanaerobacter tengcongensis).